The sequence spans 1007 residues: MMLSNLLPSPEPLGADEYGLCVASNLGLGQLFYRQVRQSPSSIAVVDDESSITYGQLHAWAVRLAAKLSQEGFVKEEAVGIVVQHGVADVVAQMAVIYAGGSCAPMDPTMRDQQIGQRLQRLNSRFILVDQSNRGRDLQFQQIVLEKHLPLTITDLCEENEFPVTTDLSHRTHLIHTSGTTSEPKAVQIAARSILQVVFHAPFEPLAVEDVVAHANNSSFDVSLFDIWAPLLRGARIAILKKMVLLDLVVLAEHIDRLGITVMATTTALLNLAASTLPTAFSKLRICFIGGEAANVSAIETVLRKGPPKMLINAYGPTECCIFCLAHRVTPKDIQMGSVSIGMPIGHTIAYIADESGCAANEGELWIGGAGVSPGYINEPEKNAKSFPTIMMPSGEAARFYRTGDIVRRRDDGQIDYVGRVDHQIKVRGFRIELEAIETSLLQTGLFAEVAAMGIQSPHQGAGSVLVAYATPKDPAHPPEISKALKILQDILPEYMIPQLQLIEKMPLNSHAKVDRKGLKQLFCQRSTSLLKPVPKLPNTLCQDTQTVLASLWATILATPKSEYKESDDFFVLGGTSLQASLLISQIRQVFRCEVSLLALYDNSTVGALASIIDHAKGGHLKTVRDEREVWLADTKLADDLPAPMTTPVNWQRDIEGRIFITGATGFVGAFLLSDLLHMPSVHQIGCLVRAPNSAAGMQRLRLALEKYNLWKDEFTNKLLAFPGLLEDKYLGLEQARFNELANWASVVFHLGARVNYTQPYSLHRPANTLGTINVVRFACTGRSKAVHYVSSISCFGPTGFFTGTASVGEDDSLLPHLEALPYDHGYAQSQWVADQLLRRLMDRGFPISIYRPGFITGHSQTGVCNPDDFFSRLMIACEQMKSYPMLPNQRKEFVPVDYVNSVILHIAASEHAVGRAYHIVPPNRDMSIDMDATMDLLGDAVNSRIHALPYMEWIDRLAANPPVALQPLQPMLAEKVHDANYPGGLKFPTLDCSLLKKYIAHLRSAC.

The segment at 35 to 428 is adenylation (A) domain; sequence QVRQSPSSIA…GRVDHQIKVR (394 aa). Residues 540 to 617 enclose the Carrier domain; that stretch reads TLCQDTQTVL…ALASIIDHAK (78 aa). Ser577 is modified (O-(pantetheine 4'-phosphoryl)serine). Residues 659-998 are short-chain dehydrogenase/reductase (R) domain; the sequence is IFITGATGFV…PTLDCSLLKK (340 aa).

Belongs to the NRP synthetase family.

It catalyses the reaction L-tyrosinal + AMP + diphosphate + NADP(+) = L-tyrosine + ATP + NADPH + H(+). The protein operates within secondary metabolite biosynthesis. Functionally, non-canonical nonribosomal peptide synthetase; part of the lnb gene cluster that mediates the biosynthesis of diastereomeric piperazines. Lna and lnb clusters encode sets of enzymes that produce overlapping sets of previously undescribed metabolites such as piperazinomycin-like metabolites or morpholine. The lna and lnb biosynthetic pathways appear to be part of a signaling network that controls the formation of sclerotia, a resilient overwintering structure. One primary function of the non-canonical nonribosomal peptide synthetases lnaA and lnbA consists in the reduction of L-tyrosine. The presence in the clusters of tailoring enzymes such as the oxidoreductases lnaB, lnbB, lnaE or lnbE, as well as of the cytochrome P450 monooxygenases lnaC, lnaD, or lnbC, might explain formation of various diastereomeric piperazines. This chain is Aldehyde reductase lnbA, found in Aspergillus flavus (strain ATCC 200026 / FGSC A1120 / IAM 13836 / NRRL 3357 / JCM 12722 / SRRC 167).